Reading from the N-terminus, the 267-residue chain is Hydroxynaphthalene reductase-like protein Arp2 (267 aa).

4 residues coordinate NADP(+): isoleucine 25, asparagine 45, aspartate 71, and asparagine 98. Residues serine 147 and serine 148 each act as proton donor in the active site. NADP(+) is bound by residues tyrosine 162, lysine 166, valine 195, and threonine 197. Tyrosine 162 serves as the catalytic Proton acceptor. The active-site Lowers pKa of active site Tyr is lysine 166.

This sequence belongs to the short-chain dehydrogenases/reductases (SDR) family.

Hydroxynaphthalene reductase-like protein; part of the Pks2 gene cluster that mediates the formation of infectious structures (appressoria), enabling these fungi to kill insects faster. The product of the Pks2 gene cluster is different from the one of Pks1 and has still not been identified. The chain is Hydroxynaphthalene reductase-like protein Arp2 from Metarhizium guizhouense (strain ARSEF 977).